The chain runs to 178 residues: Oligoribonuclease (178 aa).

One can recognise an Exonuclease domain in the interval 7-168 (LIWIDLEMTG…DDIRESIAEL (162 aa)). Residue Tyr-128 is part of the active site.

It belongs to the oligoribonuclease family.

It localises to the cytoplasm. 3'-to-5' exoribonuclease specific for small oligoribonucleotides. This is Oligoribonuclease from Pseudomonas savastanoi pv. phaseolicola (strain 1448A / Race 6) (Pseudomonas syringae pv. phaseolicola (strain 1448A / Race 6)).